A 90-amino-acid chain; its full sequence is Small ribosomal subunit protein bS18 (90 aa).

Residues 1–24 form a disordered region; that stretch reads MKPMRQKPGRGQGNKSISNALASK.

Belongs to the bacterial ribosomal protein bS18 family. In terms of assembly, part of the 30S ribosomal subunit. Forms a tight heterodimer with protein bS6.

Functionally, binds as a heterodimer with protein bS6 to the central domain of the 16S rRNA, where it helps stabilize the platform of the 30S subunit. The polypeptide is Small ribosomal subunit protein bS18 (Chlorobium phaeovibrioides (strain DSM 265 / 1930) (Prosthecochloris vibrioformis (strain DSM 265))).